Consider the following 211-residue polypeptide: Peptidyl-prolyl cis-trans isomerase FKBP14 (211 aa).

Residues 1 to 19 form the signal peptide; it reads MRLFLWNAVLTLFVTSLIG. Cysteines 38 and 96 form a disulfide. Residues 45 to 135 form the PPIase FKBP-type domain; it reads GDLMLVHYEG…IFNIDLLEIR (91 aa). The EF-hand 1 domain maps to 135–170; it reads RNGPRSHESFQEMDLNDDWKLSKDEVKAYLKKEFEK. 5 residues coordinate Ca(2+): D148, N150, D152, K154, and E159. N-linked (GlcNAc...) asparagine glycosylation is present at N176. Residues 179-211 form the EF-hand 2 domain; the sequence is HHDALVEDIFDKEDEDKDGFISAREFTYKHDEL. D192, D194, D196, F198, and E203 together coordinate Ca(2+). A Prevents secretion from ER motif is present at residues 208 to 211; that stretch reads HDEL.

Monomer. Homodimer. Interacts with type III, type IV and type X collagens.

It is found in the endoplasmic reticulum lumen. The enzyme catalyses [protein]-peptidylproline (omega=180) = [protein]-peptidylproline (omega=0). Inhibited by tacrolimus/FK506. Functionally, PPIase which accelerates the folding of proteins during protein synthesis. Has a preference for substrates containing 4-hydroxylproline modifications, including type III collagen. May also target type VI and type X collagens. The protein is Peptidyl-prolyl cis-trans isomerase FKBP14 (FKBP14) of Homo sapiens (Human).